Here is a 510-residue protein sequence, read N- to C-terminus: UDP-galactopyranose mutase (510 aa).

4 residues coordinate FAD: T18, D38, L46, and G61. UDP-alpha-D-galactose is bound by residues G61 and G62. H63 is a binding site for FAD. The NADH site is built by H68, R91, and S93. H68, R91, S93, and Y104 together coordinate NADPH. UDP-alpha-D-galactose contacts are provided by Y104, Q107, M159, Y162, N163, W167, and R182. N203 contacts NADPH. N207 contributes to the UDP-alpha-D-galactose binding site. V242 is a binding site for FAD. NADPH is bound by residues W315 and Y317. Residues Y317, R327, and Y419 each coordinate UDP-alpha-D-galactose. Position 327 (R327) interacts with FAD. NADH-binding residues include Y419 and R447. Residues Y419 and R447 each coordinate NADPH. R447 is an FAD binding site. Position 453 (Y453) interacts with UDP-alpha-D-galactose. G456, N457, and Q458 together coordinate FAD. Residue N457 participates in UDP-alpha-D-galactose binding. N457 is a binding site for NADH. Residue N457 participates in NADPH binding. Residue H460 participates in NADPH binding. FAD is bound at residue S461.

This sequence belongs to the UDP-galactopyranose/dTDP-fucopyranose mutase family. As to quaternary structure, homotetramer. The cofactor is FAD.

The enzyme catalyses UDP-alpha-D-galactose = UDP-alpha-D-galactofuranose. Its function is as follows. UDP-galactopyranose mutase, key flavoenzyme of galactofuranose metabolism that catalyzes the 6-to-5 ring contraction of UDP-galactopyranose to UDP-galactofuranose, the donor used by various galacto-furanosyltransferases. Controls the biosynthesis of galactomannan and galactofuranose containing glycoconjugates. The flavin functions as nucleophile, forming a flavin-sugar adduct that facilitates galactose-ring opening and contraction. The binding of UDP-galactopyranose induces profound conformational changes in the enzyme and two loops on opposite sides of the active site move toward each other by over 10 Angstroms to cover the substrate and create a closed active site. The chain is UDP-galactopyranose mutase from Aspergillus fumigatus (Neosartorya fumigata).